The sequence spans 99 residues: UPF0751 protein BAMEG_A0107 (99 aa).

This sequence belongs to the UPF0751 family.

This chain is UPF0751 protein BAMEG_A0107, found in Bacillus anthracis (strain CDC 684 / NRRL 3495).